We begin with the raw amino-acid sequence, 187 residues long: Ribosome-recycling factor (187 aa).

The protein belongs to the RRF family.

It is found in the cytoplasm. Its function is as follows. Responsible for the release of ribosomes from messenger RNA at the termination of protein biosynthesis. May increase the efficiency of translation by recycling ribosomes from one round of translation to another. The polypeptide is Ribosome-recycling factor (Nitrosococcus oceani (strain ATCC 19707 / BCRC 17464 / JCM 30415 / NCIMB 11848 / C-107)).